Reading from the N-terminus, the 910-residue chain is Eukaryotic translation initiation factor 3 subunit C (910 aa).

The tract at residues 1-21 (MSRFFANGSESESESSEEEIQ) is disordered. The span at 11 to 20 (SESESSEEEI) shows a compositional bias: acidic residues. Phosphoserine occurs at positions 34, 165, 176, and 185. The tract at residues 157–281 (FREAPDQESE…KRAEDDEDGE (125 aa)) is disordered. Residues 162 to 186 (DQESEAEDEVVALESDGGDAGDDSD) are compositionally biased toward acidic residues. The span at 193–207 (EAAPKAVKSAPAKAA) shows a compositional bias: low complexity. Over residues 209–235 (ADDDDSDDSIDWDSDSESETESSDDEN) the composition is skewed to acidic residues. Residues 240–268 (MRERFLKRTTEKEEKDDDKRKDKRKEQKT) show a composition bias toward basic and acidic residues. The 177-residue stretch at 639 to 815 (FHMHINLELL…ETVGMHRSEP (177 aa)) folds into the PCI domain. Residues 847 to 910 (FFQRGNMGNR…QQQVQTIDEE (64 aa)) form a disordered region. Positions 862–874 (NRNQNNQGGNWLG) are enriched in low complexity. Residues 882–891 (RNRNQRGHHK) show a composition bias toward basic residues. Low complexity predominate over residues 895–910 (DRQQQQQQQVQTIDEE).

The protein belongs to the eIF-3 subunit C family. Component of the eukaryotic translation initiation factor 3 (eIF-3) complex. The eIF-3 complex interacts with pix.

The protein resides in the cytoplasm. Component of the eukaryotic translation initiation factor 3 (eIF-3) complex, which is involved in protein synthesis of a specialized repertoire of mRNAs and, together with other initiation factors, stimulates binding of mRNA and methionyl-tRNAi to the 40S ribosome. The eIF-3 complex specifically targets and initiates translation of a subset of mRNAs involved in cell proliferation. The polypeptide is Eukaryotic translation initiation factor 3 subunit C (Drosophila sechellia (Fruit fly)).